The primary structure comprises 348 residues: Fe-S cluster assembly protein DRE2 (348 aa).

Residues 1 to 162 form an N-terminal SAM-like domain region; that stretch reads MSQYKTGLLL…KKASSSTSNL (162 aa). The disordered stretch occupies residues 137-170; it reads KTNNTKLQSGSKLPTFKKASSSTSNLPSFKKADH. A compositionally biased stretch (polar residues) spans 144 to 163; it reads QSGSKLPTFKKASSSTSNLP. Positions 163–242 are linker; it reads PSFKKADHSR…EEELIDEDGS (80 aa). Ser206 is modified (phosphoserine). 4 residues coordinate [2Fe-2S] cluster: Cys252, Cys263, Cys266, and Cys268. A fe-S binding site A region spans residues 252–268; that stretch reads CGKSKTKKKKACKDCTC. [4Fe-4S] cluster-binding residues include Cys311, Cys314, Cys322, and Cys325. 2 consecutive short sequence motifs (cx2C motif) follow at residues 311 to 314 and 322 to 325; these read CGSC and CSGC. Positions 311 to 325 are fe-S binding site B; that stretch reads CGSCSLGDAFRCSGC.

The protein belongs to the anamorsin family. Monomer. Interacts with TAH18. Interacts with MIA40. It depends on [2Fe-2S] cluster as a cofactor. [4Fe-4S] cluster is required as a cofactor.

The protein resides in the cytoplasm. It localises to the mitochondrion intermembrane space. Functionally, component of the cytosolic iron-sulfur (Fe-S) protein assembly (CIA) machinery required for the maturation of extramitochondrial Fe-S proteins. Part of an electron transfer chain functioning in an early step of cytosolic Fe-S biogenesis, facilitating the de novo assembly of a [4Fe-4S] cluster on the scaffold complex CFD1-NBP35. Electrons are transferred to DRE2 from NADPH via the FAD- and FMN-containing protein TAH18. TAH18-DRE2 are also required for the assembly of the diferric tyrosyl radical cofactor of ribonucleotide reductase (RNR), probably by providing electrons for reduction during radical cofactor maturation in the catalytic small subunit RNR2. This chain is Fe-S cluster assembly protein DRE2, found in Saccharomyces cerevisiae (strain Lalvin EC1118 / Prise de mousse) (Baker's yeast).